Here is a 469-residue protein sequence, read N- to C-terminus: Adenosylhomocysteinase (469 aa).

The substrate site is built by threonine 63, aspartate 139, and glutamate 164. 165 to 167 serves as a coordination point for NAD(+); it reads TTT. Positions 194 and 198 each coordinate substrate. Residues asparagine 199, 228–233, glutamate 251, asparagine 300, 321–323, and asparagine 375 each bind NAD(+); these read GYGDVG and IGH.

Belongs to the adenosylhomocysteinase family. NAD(+) is required as a cofactor.

The protein resides in the cytoplasm. The catalysed reaction is S-adenosyl-L-homocysteine + H2O = L-homocysteine + adenosine. It participates in amino-acid biosynthesis; L-homocysteine biosynthesis; L-homocysteine from S-adenosyl-L-homocysteine: step 1/1. In terms of biological role, may play a key role in the regulation of the intracellular concentration of adenosylhomocysteine. This Pseudomonas fluorescens (strain Pf0-1) protein is Adenosylhomocysteinase.